The primary structure comprises 430 residues: Adenylosuccinate synthetase (430 aa).

GTP-binding positions include 17–23 (GDEGKGK) and 45–47 (GHT). Catalysis depends on aspartate 18, which acts as the Proton acceptor. Mg(2+)-binding residues include aspartate 18 and glycine 45. Residues 18–21 (DEGK), 43–46 (NAGH), threonine 139, arginine 153, asparagine 229, threonine 244, and arginine 308 contribute to the IMP site. Histidine 46 acts as the Proton donor in catalysis. 304-310 (TVTGRRR) is a binding site for substrate. GTP contacts are provided by residues arginine 310, 336 to 338 (KLD), and 418 to 420 (GVG).

Belongs to the adenylosuccinate synthetase family. Homodimer. Requires Mg(2+) as cofactor.

It localises to the cytoplasm. The catalysed reaction is IMP + L-aspartate + GTP = N(6)-(1,2-dicarboxyethyl)-AMP + GDP + phosphate + 2 H(+). It functions in the pathway purine metabolism; AMP biosynthesis via de novo pathway; AMP from IMP: step 1/2. Plays an important role in the de novo pathway and in the salvage pathway of purine nucleotide biosynthesis. Catalyzes the first committed step in the biosynthesis of AMP from IMP. The sequence is that of Adenylosuccinate synthetase from Cryptococcus neoformans var. neoformans serotype D (strain B-3501A) (Filobasidiella neoformans).